The chain runs to 381 residues: Guanine nucleotide-binding protein G(olf) subunit alpha (381 aa).

The segment at 1-25 (MGCLGGNSKTTEDQGVDEKERREAN) is disordered. Glycine 2 carries N-palmitoyl glycine lipidation. Cysteine 3 carries the S-palmitoyl cysteine lipid modification. Over residues 10–25 (TTEDQGVDEKERREAN) the composition is skewed to basic and acidic residues. The G-alpha domain maps to 41 to 381 (ATHRLLLLGA…RMHLKQYELL (341 aa)). The interval 44 to 57 (RLLLLGAGESGKST) is G1 motif. GTP-binding residues include glutamate 52, serine 53, glycine 54, lysine 55, serine 56, and threonine 57. Serine 56 is a binding site for Mg(2+). Threonine 178 carries the phosphothreonine modification. The segment at 183–191 (DLLRCRVLT) is G2 motif. Leucine 185 and arginine 186 together coordinate GTP. ADP-ribosylarginine; by cholera toxin is present on arginine 188. Position 191 (threonine 191) interacts with GTP. Mg(2+) contacts are provided by threonine 191 and aspartate 210. The tract at residues 206-215 (FHMFDVGGQR) is G3 motif. Residues glycine 213, asparagine 279, lysine 280, aspartate 282, and alanine 353 each contribute to the GTP site. The G4 motif stretch occupies residues 275 to 282 (ILFLNKQD). The interval 351 to 356 (TCAVDT) is G5 motif.

This sequence belongs to the G-alpha family. G(s) subfamily. G proteins are composed of 3 units; alpha, beta and gamma. The alpha chain contains the guanine nucleotide binding site. Interacts with GAS2L2. Interacts (GDP-bound form) with RIC8B (via C-terminus); promoting GNAL folding and association with the plasma membrane. As to expression, detected in olfactory neuroepithelium, brain, testis, and to a lower extent in retina, lung alveoli, spleen. Trace amounts where seen in kidney, adrenal gland and liver. Found to be expressed in all the insulinomas examined.

The protein localises to the cell membrane. It catalyses the reaction GTP + H2O = GDP + phosphate + H(+). Guanine nucleotide-binding protein (G protein) involved as transducer in olfactory signal transduction controlled by G protein-coupled receptors (GPCRs). Contains the guanine nucleotide binding site and alternates between an active, GTP-bound state and an inactive, GDP-bound state. Signaling by an activated GPCR promotes GDP release and GTP binding. The alpha subunit has a low GTPase activity that converts bound GTP to GDP, thereby terminating the signal. Both GDP release and GTP hydrolysis are modulated by numerous regulatory proteins. GNAL/G(olf) alpha specifically mediates olfactory signal transduction within the olfactory neuroepithelium and the basal ganglia following GPCRs activation. Acts by promoting the specific activation of adenylyl cyclase ADCY3, resulting in increased levels of the signaling molecule cAMP. The protein is Guanine nucleotide-binding protein G(olf) subunit alpha of Homo sapiens (Human).